The primary structure comprises 298 residues: 3-sulfolactaldehyde reductase (298 aa).

NAD(+) contacts are provided by residues 11 to 12, aspartate 31, leucine 65, and threonine 96; that span reads QM. Residue arginine 123 participates in 2,3-dihydroxypropane-1-sulfonate binding. The active site involves lysine 171. 174 to 178 contributes to the 2,3-dihydroxypropane-1-sulfonate binding site; that stretch reads NNYMS. Residue lysine 240 participates in NAD(+) binding.

The protein belongs to the HIBADH-related family. 3-sulfolactaldehyde reductase subfamily. As to quaternary structure, homotetramer. Dimer of dimers.

The catalysed reaction is (2S)-3-sulfopropanediol + NAD(+) = (2S)-3-sulfolactaldehyde + NADH + H(+). It catalyses the reaction 4-hydroxybutanoate + NAD(+) = succinate semialdehyde + NADH + H(+). Its activity is regulated as follows. Inhibited by the NADH analogs tetrahydro-NADH and hexahydro-NADH. Functionally, reduces 3-sulfolactaldehyde (SLA) to 2,3-dihydroxypropane 1-sulfonate (DHPS). Metabolite profiling studies showed that the enzyme also catalyzes in vitro the NADH-dependent reduction of succinic semialdehyde (SSA) to 4-hydroxybutyrate (GHB), and that it could be involved in the metabolism of SSA, and other potentially toxic intermediates that may accumulate under stress conditions. However, the enzyme exhibits a 42,000-fold greater catalytic efficiency for the reduction of SLA over SSA. Shows no detectable activity on the analogous glycolytic intermediate glyceraldehyde-3-phosphate. The chain is 3-sulfolactaldehyde reductase (yihU) from Escherichia coli (strain K12).